We begin with the raw amino-acid sequence, 359 residues long: MEKIFQNVEIKPFLIDFSNPFIKNAAKRLFQLEEQLPLVPVNVVMDFKGISRAAVHGLSRVLQDEIPNYMLDIKPGGYKIEDSTDLFMTEQFIRNRINFIPIYAKNETLVFALRSLNNSCEVKTIYSRDLIQVAGPKLKYPIFNPTFEIGFLQPGKSLIIEDIYIKKGIGRKHAAFNLAVKTHFSHLDIEQYPTDKKEYMALSGYKQSSMTSDPRHHRLGLCFPAVPLPHINQAVRTYLKNACRIIIGRIQSIQKIYENFEEPQPELVLFSLDEEKTKAIITIKDETHTIGNLLKTCIYEMIPDISFVGYQCVPHKQEMVLTIIHKASQEDLITLLEKSIQNIIQTFQILEKNVDELIA.

The protein in the N-terminal section; belongs to the archaeal RpoD/eukaryotic RPB3 RNA polymerase subunit family. This sequence in the C-terminal section; belongs to the archaeal RpoL/eukaryotic RPB11/RPC19 RNA polymerase subunit family. In terms of assembly, part of the viral DNA-directed RNA polymerase that consists of 8 polII-like subunits (RPB1, RPB2, RPB3, RPB5, RPB6, RPB7, RPB9, RPB10), a capping enzyme and a termination factor.

The protein localises to the host cytoplasm. It is found in the virion. Functionally, component of the DNA-directed RNA polymerase (RNAP) that catalyzes the transcription in the cytoplasm of viral DNA into RNA using the four ribonucleoside triphosphates as substrates. This chain is DNA-directed RNA polymerase RPB3-11 homolog, found in Ornithodoros (relapsing fever ticks).